Here is a 358-residue protein sequence, read N- to C-terminus: B3 domain-containing transcription factor NGA3 (358 aa).

Residues 1-14 are compositionally biased toward polar residues; sequence MDLSLAPTTTTSSD. The tract at residues 1–45 is disordered; the sequence is MDLSLAPTTTTSSDQEQDRDQELTSNIGASSSSGPSGNNNNLPMM. A compositionally biased stretch (low complexity) spans 25–45; the sequence is SNIGASSSSGPSGNNNNLPMM. Positions 56 to 162 form a DNA-binding region, TF-B3; the sequence is FDKVVTPSDV…KLYIDWRHRP (107 aa). Residues 310–358 are disordered; it reads EIGASSSSSSALRLNLSTDHDDDNDDGDDGDDDQFAKKGKSSLSLNFNP. Residues 329 to 342 show a composition bias toward acidic residues; the sequence is HDDDNDDGDDGDDD.

The protein resides in the nucleus. Its function is as follows. Regulates lateral organ growth. Functionally redundant with NGA1, NGA2 and NGA4. This chain is B3 domain-containing transcription factor NGA3 (NGA3), found in Arabidopsis thaliana (Mouse-ear cress).